A 254-amino-acid polypeptide reads, in one-letter code: Phosphoribosylaminoimidazole-succinocarboxamide synthase (254 aa).

Belongs to the SAICAR synthetase family.

The catalysed reaction is 5-amino-1-(5-phospho-D-ribosyl)imidazole-4-carboxylate + L-aspartate + ATP = (2S)-2-[5-amino-1-(5-phospho-beta-D-ribosyl)imidazole-4-carboxamido]succinate + ADP + phosphate + 2 H(+). The protein operates within purine metabolism; IMP biosynthesis via de novo pathway; 5-amino-1-(5-phospho-D-ribosyl)imidazole-4-carboxamide from 5-amino-1-(5-phospho-D-ribosyl)imidazole-4-carboxylate: step 1/2. In Bartonella quintana (strain Toulouse) (Rochalimaea quintana), this protein is Phosphoribosylaminoimidazole-succinocarboxamide synthase.